Consider the following 602-residue polypeptide: Proteasome-associated ATPase (602 aa).

Over residues 1–13 (MQHDLPGGRHDEA) the composition is skewed to basic and acidic residues. The disordered stretch occupies residues 1-33 (MQHDLPGGRHDEADSSETGGAGTTENPSSEQAR). Over residues 23 to 32 (TTENPSSEQA) the composition is skewed to polar residues. Residues 28–103 (SSEQARQIRF…LREEVDRLAQ (76 aa)) are a coiled coil. 291-296 (GCGKTL) contributes to the ATP binding site. Positions 601-602 (YL) are docks into pockets in the proteasome alpha-ring.

Belongs to the AAA ATPase family. Homohexamer. Assembles into a hexameric ring structure that caps the 20S proteasome core. Strongly interacts with the prokaryotic ubiquitin-like protein Pup through a hydrophobic interface; the interacting region of ARC lies in its N-terminal coiled-coil domain. There is one Pup binding site per ARC hexamer ring. Upon ATP-binding, the C-terminus of ARC interacts with the alpha-rings of the proteasome core, possibly by binding to the intersubunit pockets.

Its pathway is protein degradation; proteasomal Pup-dependent pathway. Its function is as follows. ATPase which is responsible for recognizing, binding, unfolding and translocation of pupylated proteins into the bacterial 20S proteasome core particle. May be essential for opening the gate of the 20S proteasome via an interaction with its C-terminus, thereby allowing substrate entry and access to the site of proteolysis. Thus, the C-termini of the proteasomal ATPase may function like a 'key in a lock' to induce gate opening and therefore regulate proteolysis. The chain is Proteasome-associated ATPase from Saccharomonospora viridis (strain ATCC 15386 / DSM 43017 / JCM 3036 / CCUG 5913 / NBRC 12207 / NCIMB 9602 / P101) (Thermoactinomyces viridis).